A 56-amino-acid polypeptide reads, in one-letter code: Large ribosomal subunit protein bL33 (56 aa).

Belongs to the bacterial ribosomal protein bL33 family.

The polypeptide is Large ribosomal subunit protein bL33 (Histophilus somni (strain 129Pt) (Haemophilus somnus)).